Consider the following 147-residue polypeptide: Large ribosomal subunit protein bL9 (147 aa).

Belongs to the bacterial ribosomal protein bL9 family.

Its function is as follows. Binds to the 23S rRNA. The sequence is that of Large ribosomal subunit protein bL9 from Caldanaerobacter subterraneus subsp. tengcongensis (strain DSM 15242 / JCM 11007 / NBRC 100824 / MB4) (Thermoanaerobacter tengcongensis).